Here is a 182-residue protein sequence, read N- to C-terminus: ATP synthase subunit delta, mitochondrial (182 aa).

A mitochondrion-targeting transit peptide spans 1 to 17 (MFRTFGRRLVSCTLPLL).

This sequence belongs to the ATPase epsilon chain family. F-type ATPases have 2 components, F(1) - the catalytic core - and F(o) - the membrane proton channel. F(1) has five subunits: alpha(3), beta(3), gamma(1), delta(1), epsilon(1), plus the additional subunit P18 (Tb427.05.1710) that is not present in F(1)F(o) ATP synthase from metazoa. Subunit P18 (Tb927.5.1710) interacts with the alpha subunit with a 1:1 stoichiometry; the interaction is direct. Subunit gamma is part of the central stalk. F(o) has three main subunits: a, b and c. The trypanosomal ATPase complex contains additional subunits that are not present in the F(1)F(o) ATP synthase from metazoa.

The protein localises to the mitochondrion. Its subcellular location is the mitochondrion inner membrane. Mitochondrial membrane ATP synthase (F(1)F(o) ATP synthase) produces ATP from ADP in the presence of a proton gradient across the membrane which is generated by electron transport complexes of the respiratory chain. F-type ATPases consist of two structural domains, F(1) - containing the extramembraneous catalytic core, and F(o) - containing the membrane proton channel, linked together by a central stalk and a peripheral stalk. During catalysis, ATP synthesis in the catalytic domain of F(1) is coupled via a rotary mechanism of the central stalk subunits to proton translocation. Subunits alpha and beta form the catalytic core in F(1). Rotation of the central stalk against the surrounding alpha(3)beta(3) subunits leads to hydrolysis of ATP in three separate catalytic sites on the beta subunits. Contrary to the procyclic, insect form that requires F(1)F(o) ATP synthase for ATP synthesis, the bloodstream form relies on ATP hydrolysis by F(1)F(o) ATP synthase to maintain its mitochondrial membrane potential. This is ATP synthase subunit delta, mitochondrial from Trypanosoma brucei brucei.